Reading from the N-terminus, the 76-residue chain is Small ribosomal subunit protein bS16c (76 aa).

Belongs to the bacterial ribosomal protein bS16 family.

Its subcellular location is the plastid. It localises to the chloroplast. In Guillardia theta (Cryptophyte), this protein is Small ribosomal subunit protein bS16c.